Reading from the N-terminus, the 2035-residue chain is MFSKKPHGDVKKSTQKVLDTKKDALTRLKHLRIVIENADSIDLKQFFDQHFSHIYYVFFENFVTIEASLKQKGHKSQREELDAILFIFEKILQLLPERIHQRWQFHSIGLILKKLLHTGNSLKIRREGVRLFLLWLQALQDNCSKEQLWMFSCLIPGFSAPQSEYGPRTLDNLINPPLNLQETQVTIEEVTPLVPPQSGDKGQEDLTSYFLEALLKYIVIQVKSLEWKNKENQERGFSFLFSHFKKFYLPYIFPNLCKENSLYHPVLDIPQVRPKPHYVMVKKDAETNETIYCTKEPFIQARVIVIRWLVSFWLEPKPHSGPNIPGMEGEVLPKNIQRAAASLVSREESKNDTVDKADKTAEPEQSHSNTSTLTEREPSSSSLCSIDEEHLTDIEIVRRVFSSKRSNVNFVTEIFRQAFLLPICEAAAMRKVVKVYQEWIQQEGKPLFMQEPEETVITSSDIPCSENVTDHDISIEDGEKREEENGTNISEHVRNSTWTKNGSYQEAFHVSEEATEQNIQAGTQAVLQVFIINSSNIFLLEPANEIKNLLDEHTDMCKRILNIYRYMVVQVSMDKKTWEQMLLVLLRVTESVLKMSSQAFLQFQGKKNMTLAGRLAGPLFQTLIVAWIKANLNVYISRELWDDLLSVLSSLTYWEELATEWSLTMETLTKVLARNLYSLDLSDLPLDKLSEQKQKKHKGKGVGHEFQKVSVDKSFSRGWSRDQPGQAPMRQRSATTTGSPGTEKARSIVRQKTVDIDDSQILPRSTRVRHFSQSEDTGNEVFGALHEEQPLPRSSSTSDILEPFTVERAKVNKEDTSPKLPPLNSETGGSSANVPDLMDEFIAERLRSGNASTMTRRGSSPGSLEIPKDLPDILNKQNQMRPVDDPGVPSEWTSPASAGSSDLMSSDSHSDSFSAFQCEGRKFDNFGFGTDIGIPSSADVDSGSGHHQSTEEQEVASLTTLHLDSETSSLNQQAFSAEVATVTGSESASPVHSALGSRSQTPSPSTLNIDHMEQKDLQLDEKLHHSVLQTPDDLEISEFPSECCSVMAGGTLTGWHADVATVMWRRMLGILGDVNAIMDPEIHAQVFDYLCELWQNLAKIRDNLGISADNLTSPSPPVLIPPLRILTPWLFKATMLTDKYKQGKLHAYKLICNTMKRRQDVSPNRDFLTHFYNIMHCGLLHIDQDIVNTIIKHCSPQFFSLGLPGATMLIMDFIIAAGRVASSAFLNAPRVEAQVLLGSLVCFPNLYCELPALHPSTPDIAVSQFTDVKELIIKTVLSSARDEPSGPARCVALCSLGIWICEELVHESHHPQIKEALNVICVSLKFTNKTVAHVACNMLHMLVHYAPRLQTYQPDSPLKIIQILIATITHLLPSTEASSYEMDKRLVVSLLLCLLDWIMALPLKTLLQSVHSTGAENEKTEKSVLNCIYKVLHGCVYGAQSFSHPKYFPISLSDLASVDYDPFMHLESLREPEPLHSPDSERSSKLQPVTEVKTQMQQGLISIAARTVITHLVNHLGHYPMSGGPAMLTSQVCENHDNHYSESTELSPELFDSPNIQFFVLNNTTLVSCIQIRSEESVPGGGLAAGLVSANSNVRIIVRDLSGKYSWDSAILYGPPIVSGLPEPTSFILSMSYQEKPEEPPTSNECLEDITVKDGLSLQLRRFRETVPTWSTIREEEDVLDELLQYLGTTSPECLQRTGISLNVPAPQPVCISEKQENDVINAILKQYTEEKEFVEKHFNDLNMKASEQDEPTPQKPQSAFYYCRLLLSILGMNSWDKRRSFHLLKKNEKLLRELRNLDSRQCRETHKIAVFYVAEGQEDKYSILTNIGGSQAYEDFVAGLGWEVNLTNHCGFMGGLQKNKSTGLTTPYFATSTVEVIFHVSTRMPSESDDSLTKKLRHLGNDEVHIVWSEHTRDYRRGIIPTEFGDVLIVIYPMKNHMFSIQIMKKPEVPFFGPLFDGAIVNGKVLPIMVRSTAINASRALKSLIPLYQNLYEERARYLQTIVQHHLEPTTFEDFAAQVFSPAPYHHFPADADH.

The interval 343–384 (LVSREESKNDTVDKADKTAEPEQSHSNTSTLTEREPSSSSLC) is disordered. Residues 345-365 (SREESKNDTVDKADKTAEPEQ) show a composition bias toward basic and acidic residues. The segment covering 366–384 (SHSNTSTLTEREPSSSSLC) has biased composition (polar residues). Phosphoserine occurs at positions 710 and 720. Residues 714–754 (SFSRGWSRDQPGQAPMRQRSATTTGSPGTEKARSIVRQKTV) form a disordered region. Thr-753 is modified (phosphothreonine). Phosphoserine is present on Ser-772. Thr-777 carries the post-translational modification Phosphothreonine. Ser-796 is subject to Phosphoserine. The span at 807-817 (ERAKVNKEDTS) shows a compositional bias: basic and acidic residues. Disordered stretches follow at residues 807–834 (ERAKVNKEDTSPKLPPLNSETGGSSANV) and 848–911 (SGNA…SHSD). Polar residues-rich tracts occupy residues 824–833 (NSETGGSSAN) and 849–862 (GNASTMTRRGSSPG). A phosphoserine mark is found at Ser-859, Ser-860, and Ser-863. Low complexity predominate over residues 894–911 (SPASAGSSDLMSSDSHSD). Residues Ser-985, Ser-989, Ser-993, and Ser-999 each carry the phosphoserine modification. Residues 986-1008 (ESASPVHSALGSRSQTPSPSTLN) are disordered. Residue Thr-1001 is modified to Phosphothreonine. Phosphoserine is present on residues Ser-1003 and Ser-1477. Residues 1326-2034 (FTNKTVAHVA…PYHHFPADAD (709 aa)) are minimal domain that binds to TCF3/E12. A coiled-coil region spans residues 1713–1746 (SEKQENDVINAILKQYTEEKEFVEKHFNDLNMKA). In terms of domain architecture, Rap-GAP spans 1795–2003 (LRNLDSRQCR…EERARYLQTI (209 aa)).

As to quaternary structure, component of the heterodimeric RalGAP1 complex with RALGAPB. Heterodimerization is required for activity. Interacts with the HLH region of TCF3/isoform E12. As to expression, highly expressed in brain, thymus and testis with lower levels in lung and spleen and barely detectable in heart or liver (at protein level).

The protein resides in the cytoplasm. It localises to the nucleus. Functionally, catalytic subunit of the heterodimeric RalGAP1 complex which acts as a GTPase activator for the Ras-like small GTPases RALA and RALB. The chain is Ral GTPase-activating protein subunit alpha-1 (Ralgapa1) from Rattus norvegicus (Rat).